We begin with the raw amino-acid sequence, 137 residues long: uncharacterized protein (137 aa).

The segment covering 1–10 has biased composition (low complexity); that stretch reads MISVDVPGHP. Residues 1–23 are disordered; sequence MISVDVPGHPGDAGGGGGGARKV. Residues 11–20 are compositionally biased toward gly residues; sequence GDAGGGGGGA.

This is an uncharacterized protein from Human adenovirus C serotype 2 (HAdV-2).